A 365-amino-acid polypeptide reads, in one-letter code: Probable dual-specificity RNA methyltransferase RlmN (365 aa).

Residue E108 is the Proton acceptor of the active site. Residues 114–352 enclose the Radical SAM core domain; that stretch reads YPDRNTVCIS…SCTVRDTRGR (239 aa). An intrachain disulfide couples C121 to C358. Positions 128, 132, and 135 each coordinate [4Fe-4S] cluster. Residues 179–180, S213, 236–238, and N315 each bind S-adenosyl-L-methionine; these read GE and SLH. The active-site S-methylcysteine intermediate is the C358.

The protein belongs to the radical SAM superfamily. RlmN family. The cofactor is [4Fe-4S] cluster.

It localises to the cytoplasm. The enzyme catalyses adenosine(2503) in 23S rRNA + 2 reduced [2Fe-2S]-[ferredoxin] + 2 S-adenosyl-L-methionine = 2-methyladenosine(2503) in 23S rRNA + 5'-deoxyadenosine + L-methionine + 2 oxidized [2Fe-2S]-[ferredoxin] + S-adenosyl-L-homocysteine. It catalyses the reaction adenosine(37) in tRNA + 2 reduced [2Fe-2S]-[ferredoxin] + 2 S-adenosyl-L-methionine = 2-methyladenosine(37) in tRNA + 5'-deoxyadenosine + L-methionine + 2 oxidized [2Fe-2S]-[ferredoxin] + S-adenosyl-L-homocysteine. Specifically methylates position 2 of adenine 2503 in 23S rRNA and position 2 of adenine 37 in tRNAs. This Mycolicibacterium gilvum (strain PYR-GCK) (Mycobacterium gilvum (strain PYR-GCK)) protein is Probable dual-specificity RNA methyltransferase RlmN.